A 249-amino-acid polypeptide reads, in one-letter code: DNA polymerase sliding clamp 1 (249 aa).

Belongs to the PCNA family. In terms of assembly, forms heterodimers with PCNA2, which then recruit PCNA3; does not form homotrimers. The heterodimers interact with RfcS homotetramers. Heterotrimer which circularizes head-to-tail (head is at N-terminus, tail is at C-terminus) to form a toroid; DNA passes through its center. Replication factor C (RFC) is required to load the toroid on the DNA. Heterotrimer interacts, probably via this subunit, with flap endonuclease 1 (fen), Hjc, Dpo4, and XPF.

In terms of biological role, one of the sliding clamp subunits that acts as a moving platform for DNA processing. Responsible for tethering the catalytic subunit of DNA polymerase to DNA during high-speed replication. Heterotrimer stimulates the Holliday junction resolvase Hjc. DNA polymerase I, DNA ligase and the flap endonuclease may be constitutively associated with the PCNA heterotrimer forming a scanning complex able to couple DNA synthesis and Okazaki fragment maturation. The protein is DNA polymerase sliding clamp 1 of Saccharolobus solfataricus (strain ATCC 35092 / DSM 1617 / JCM 11322 / P2) (Sulfolobus solfataricus).